Here is a 265-residue protein sequence, read N- to C-terminus: 4-hydroxy-tetrahydrodipicolinate reductase (265 aa).

9–14 (GPRGRM) serves as a coordination point for NAD(+). Lysine 37 lines the NADP(+) pocket. Residues 99–101 (GTT) and 125–128 (APNF) each bind NAD(+). Histidine 155 functions as the Proton donor/acceptor in the catalytic mechanism. A (S)-2,3,4,5-tetrahydrodipicolinate-binding site is contributed by histidine 156. Lysine 159 functions as the Proton donor in the catalytic mechanism. 165-166 (GT) provides a ligand contact to (S)-2,3,4,5-tetrahydrodipicolinate. The segment covering 178-190 (RESQKQGHPKEEE) has biased composition (basic and acidic residues). The interval 178–200 (RESQKQGHPKEEETLPGARGADM) is disordered.

The protein belongs to the DapB family.

Its subcellular location is the cytoplasm. It catalyses the reaction (S)-2,3,4,5-tetrahydrodipicolinate + NAD(+) + H2O = (2S,4S)-4-hydroxy-2,3,4,5-tetrahydrodipicolinate + NADH + H(+). The enzyme catalyses (S)-2,3,4,5-tetrahydrodipicolinate + NADP(+) + H2O = (2S,4S)-4-hydroxy-2,3,4,5-tetrahydrodipicolinate + NADPH + H(+). Its pathway is amino-acid biosynthesis; L-lysine biosynthesis via DAP pathway; (S)-tetrahydrodipicolinate from L-aspartate: step 4/4. Its function is as follows. Catalyzes the conversion of 4-hydroxy-tetrahydrodipicolinate (HTPA) to tetrahydrodipicolinate. This chain is 4-hydroxy-tetrahydrodipicolinate reductase, found in Oceanobacillus iheyensis (strain DSM 14371 / CIP 107618 / JCM 11309 / KCTC 3954 / HTE831).